We begin with the raw amino-acid sequence, 578 residues long: Dapdiamide synthesis protein DdaD (578 aa).

In terms of domain architecture, Carrier spans 498–573 (ESISATEHQI…KMAAWLDASS (76 aa)). O-(pantetheine 4'-phosphoryl)serine is present on Ser533.

The protein belongs to the ATP-dependent AMP-binding enzyme family. It depends on pantetheine 4'-phosphate as a cofactor.

It functions in the pathway antibiotic biosynthesis. Functionally, involved in dapdiamide antibiotics biosynthesis. Activates and sequesters N-beta-fumaramoyl-DAP as a covalently tethered thioester for subsequent oxidative modification of the fumaramoyl group. The polypeptide is Dapdiamide synthesis protein DdaD (Enterobacter agglomerans (Erwinia herbicola)).